Reading from the N-terminus, the 502-residue chain is Tyrosine-protein kinase receptor old-1 (502 aa).

Residues 1–19 (MKGTLIFVVFYSSYGFAHC) form the signal peptide. The Extracellular segment spans residues 20–58 (NTILRSSSLSRNFEDSLRRIPRSTDKDETGFEDSNVQEV). Residues 59 to 79 (IFILLYCLFVALAILICGLII) traverse the membrane as a helical segment. Topologically, residues 80-502 (FYNSRKRELR…WLSDEKHCDS (423 aa)) are cytoplasmic. The disordered stretch occupies residues 99 to 140 (LLEPTSADHKRRNSSNIVPPEPTPYPITSGESDLRQTPSRLS). Residues 127-140 (SGESDLRQTPSRLS) show a composition bias toward polar residues. The 299-residue stretch at 175–473 (ISKGRPLGSG…ELKTTSNEYF (299 aa)) folds into the Protein kinase domain. Residues 181 to 189 (LGSGEFGII) and K213 contribute to the ATP site. D321 (proton acceptor) is an active-site residue.

The protein belongs to the protein kinase superfamily. Tyr protein kinase family.

Its subcellular location is the cell membrane. The enzyme catalyses L-tyrosyl-[protein] + ATP = O-phospho-L-tyrosyl-[protein] + ADP + H(+). Its function is as follows. Receptor tyrosine kinase which plays a role in promoting longevity and resistance to stresses including UV irradiation and high temperatures, probably downstream of daf-16. This is Tyrosine-protein kinase receptor old-1 from Caenorhabditis elegans.